The following is a 147-amino-acid chain: UPF0310 protein in gntR 5'region (147 aa).

Belongs to the UPF0310 family.

The polypeptide is UPF0310 protein in gntR 5'region (oug) (Bacillus licheniformis).